Reading from the N-terminus, the 213-residue chain is 3,4-dihydroxy-2-butanone 4-phosphate synthase (213 aa).

Residues 37 to 38 (RE), D42, 150 to 154 (RAGHT), and E174 each bind D-ribulose 5-phosphate. Residue E38 participates in Mg(2+) binding. H153 provides a ligand contact to Mg(2+).

The protein belongs to the DHBP synthase family. As to quaternary structure, homodimer. The cofactor is Mg(2+). Requires Mn(2+) as cofactor.

The catalysed reaction is D-ribulose 5-phosphate = (2S)-2-hydroxy-3-oxobutyl phosphate + formate + H(+). It participates in cofactor biosynthesis; riboflavin biosynthesis; 2-hydroxy-3-oxobutyl phosphate from D-ribulose 5-phosphate: step 1/1. Its function is as follows. Catalyzes the conversion of D-ribulose 5-phosphate to formate and 3,4-dihydroxy-2-butanone 4-phosphate. This Wigglesworthia glossinidia brevipalpis protein is 3,4-dihydroxy-2-butanone 4-phosphate synthase.